A 492-amino-acid chain; its full sequence is MIITQMSQFYMAGLGLLFLINILPGTTGQVESRRQEPGDFVKQDIGGLSPKHAPDIPDDSTDNITIFTRILDRLLDGYDNRLRPGLGDAVTEVKTDIYVTSFGPVSDTDMEYTIDVFFRQTWHDERLKFDGPMKILPLNNLLASKIWTPDTFFHNGKKSVAHNMTTPNKLLRLVDNGTLLYTMRLTIHAECPMHLEDFPMDVHACPLKFGSYAYTTAEVVYSWTLGKNKSVEVAQDGSRLNQYDLLGHVVGTEIIRSSTGEYVVMTTHFHLKRKIGYFVIQTYLPCIMTVILSQVSFWLNRESVPARTVFGVTTVLTMTTLSISARNSLPKVAYATAMDWFMAVCYAFVFSALIEFATVNYFTKRSWAWEGKKVPEALEMKKKTPAVPTKKTSTTFNIVGTTYPINLAKDTEFSAISKGAAPSTSSTPTIIASPKTTCVQDIPTETKTYNSVSKVDKISRIIFPVLFAIFNLVYWATYVNRESAIKGMIRKQ.

Positions 1 to 28 (MIITQMSQFYMAGLGLLFLINILPGTTG) are cleaved as a signal peptide. Residues 29-274 (QVESRRQEPG…MTTHFHLKRK (246 aa)) lie on the Extracellular side of the membrane. Asparagine 63 is a glycosylation site (N-linked (GlcNAc...) asparagine). Arginine 119 contributes to the 4-aminobutanoate binding site. Asparagine 163 and asparagine 176 each carry an N-linked (GlcNAc...) asparagine glycan. Threonine 182 provides a ligand contact to 4-aminobutanoate. A disulfide bridge links cysteine 191 with cysteine 205. An N-linked (GlcNAc...) asparagine glycan is attached at asparagine 228. Residues 275–295 (IGYFVIQTYLPCIMTVILSQV) traverse the membrane as a helical segment. Residues 296 to 305 (SFWLNRESVP) are Cytoplasmic-facing. The helical transmembrane segment at 306 to 325 (ARTVFGVTTVLTMTTLSISA) threads the bilayer. Residues 326–336 (RNSLPKVAYAT) are Extracellular-facing. Residues 337–357 (AMDWFMAVCYAFVFSALIEFA) form a helical membrane-spanning segment. Over 358–457 (TVNYFTKRSW…TYNSVSKVDK (100 aa)) the chain is Cytoplasmic. Serine 426 carries the post-translational modification Phosphoserine. Threonine 427 is subject to Phosphothreonine. Serine 433 is subject to Phosphoserine. A helical membrane pass occupies residues 458 to 478 (ISRIIFPVLFAIFNLVYWATY). Topologically, residues 479 to 492 (VNRESAIKGMIRKQ) are extracellular.

Belongs to the ligand-gated ion channel (TC 1.A.9) family. Gamma-aminobutyric acid receptor (TC 1.A.9.5) subfamily. GABRA3 sub-subfamily. As to quaternary structure, heteropentamer, formed by a combination of alpha (GABRA1-6), beta (GABRB1-3), gamma (GABRG1-3), delta (GABRD), epsilon (GABRE), rho (GABRR1-3), pi (GABRP) and theta (GABRQ) chains, each subunit exhibiting distinct physiological and pharmacological properties. Binds UBQLN1. Interacts with GPHN.

It localises to the postsynaptic cell membrane. It is found in the cell membrane. It catalyses the reaction chloride(in) = chloride(out). Functionally, alpha subunit of the heteropentameric ligand-gated chloride channel gated by gamma-aminobutyric acid (GABA), a major inhibitory neurotransmitter in the brain. GABA-gated chloride channels, also named GABA(A) receptors (GABAAR), consist of five subunits arranged around a central pore and contain GABA active binding site(s) located at the alpha and beta subunit interface(s). When activated by GABA, GABAARs selectively allow the flow of chloride anions across the cell membrane down their electrochemical gradient. Chloride influx into the postsynaptic neuron following GABAAR opening decreases the neuron ability to generate a new action potential, thereby reducing nerve transmission. This is Gamma-aminobutyric acid receptor subunit alpha-3 (GABRA3) from Bos taurus (Bovine).